A 225-amino-acid chain; its full sequence is MRAPPLLLLLAACAPPSGAAVDPTPPGWEPAPDAPWCPYKVLSEGPEAGGGRLCFRSPVRGFRCQTPGCVTLASAGGSLRAHVLRNRSVLLQWRLAPAEARRVRVFALNCSWRGTYTRFPCDRVLLGASCRDYLLPDVHDSVRYRLCLQPLPLPLRAELAAAPPELAECVEFTAEPAAMQEIVVAMTAVGGSICVMLVVICLLVAYITENLMHPTFRRPSLRRQP.

The N-terminal stretch at 1–19 (MRAPPLLLLLAACAPPSGA) is a signal peptide. Topologically, residues 20–181 (AVDPTPPGWE…FTAEPAAMQE (162 aa)) are extracellular. The Fibronectin type-III domain maps to 72–167 (LASAGGSLRA…ELAAAPPELA (96 aa)). 2 N-linked (GlcNAc...) asparagine glycosylation sites follow: asparagine 86 and asparagine 109. The helical transmembrane segment at 182–202 (IVVAMTAVGGSICVMLVVICL) threads the bilayer. At 203 to 225 (LVAYITENLMHPTFRRPSLRRQP) the chain is on the cytoplasmic side.

The protein localises to the membrane. In Rattus norvegicus (Rat), this protein is Fibronectin type III domain-containing protein 10 (Fndc10).